The following is a 137-amino-acid chain: ATP synthase epsilon chain (137 aa).

The protein belongs to the ATPase epsilon chain family. F-type ATPases have 2 components, CF(1) - the catalytic core - and CF(0) - the membrane proton channel. CF(1) has five subunits: alpha(3), beta(3), gamma(1), delta(1), epsilon(1). CF(0) has three main subunits: a, b and c.

The protein resides in the cell membrane. Its function is as follows. Produces ATP from ADP in the presence of a proton gradient across the membrane. The sequence is that of ATP synthase epsilon chain from Thermobifida fusca (strain YX).